Reading from the N-terminus, the 144-residue chain is Transcriptional regulator SlyA (144 aa).

One can recognise an HTH marR-type domain in the interval 2 to 135; that stretch reads ESPLGSDLAR…LNKIISKLEK (134 aa). A DNA-binding region (H-T-H motif) is located at residues 49-72; it reads QIQLAKAIGIEQPSLVRTLDQLEE.

Belongs to the SlyA family. Homodimer.

In terms of biological role, transcription regulator that can specifically activate or repress expression of target genes. The chain is Transcriptional regulator SlyA from Blochmanniella pennsylvanica (strain BPEN).